Reading from the N-terminus, the 689-residue chain is DNA ligase (689 aa).

NAD(+) is bound by residues 40-44 (DSEYD), 89-90 (SL), and E121. K123 functions as the N6-AMP-lysine intermediate in the catalytic mechanism. NAD(+) is bound by residues R144, E179, K295, and K319. The Zn(2+) site is built by C413, C416, C431, and C437. The region spanning 610 to 689 (REQSSLTDKI…EEWLTLIKNV (80 aa)) is the BRCT domain.

The protein belongs to the NAD-dependent DNA ligase family. LigA subfamily. It depends on Mg(2+) as a cofactor. Mn(2+) serves as cofactor.

It carries out the reaction NAD(+) + (deoxyribonucleotide)n-3'-hydroxyl + 5'-phospho-(deoxyribonucleotide)m = (deoxyribonucleotide)n+m + AMP + beta-nicotinamide D-nucleotide.. Functionally, DNA ligase that catalyzes the formation of phosphodiester linkages between 5'-phosphoryl and 3'-hydroxyl groups in double-stranded DNA using NAD as a coenzyme and as the energy source for the reaction. It is essential for DNA replication and repair of damaged DNA. The sequence is that of DNA ligase from Rickettsia rickettsii (strain Iowa).